Here is a 324-residue protein sequence, read N- to C-terminus: Phospho-N-acetylmuramoyl-pentapeptide-transferase (324 aa).

Helical transmembrane passes span 5 to 25 (GLLV…PLFI), 52 to 72 (PTMG…IMAI), 77 to 97 (LGAE…IGFL), 122 to 142 (VIAI…YIMI), 149 to 169 (FELG…GSNA), 176 to 196 (LDGL…IIAV), 201 to 221 (FGVA…LVFN), 227 to 247 (VFMG…VAIL), 253 to 273 (LLVI…IQVI), and 302 to 322 (VVVT…YIGV).

This sequence belongs to the glycosyltransferase 4 family. MraY subfamily. It depends on Mg(2+) as a cofactor.

It is found in the cell membrane. It catalyses the reaction UDP-N-acetyl-alpha-D-muramoyl-L-alanyl-gamma-D-glutamyl-meso-2,6-diaminopimeloyl-D-alanyl-D-alanine + di-trans,octa-cis-undecaprenyl phosphate = di-trans,octa-cis-undecaprenyl diphospho-N-acetyl-alpha-D-muramoyl-L-alanyl-D-glutamyl-meso-2,6-diaminopimeloyl-D-alanyl-D-alanine + UMP. The protein operates within cell wall biogenesis; peptidoglycan biosynthesis. In terms of biological role, catalyzes the initial step of the lipid cycle reactions in the biosynthesis of the cell wall peptidoglycan: transfers peptidoglycan precursor phospho-MurNAc-pentapeptide from UDP-MurNAc-pentapeptide onto the lipid carrier undecaprenyl phosphate, yielding undecaprenyl-pyrophosphoryl-MurNAc-pentapeptide, known as lipid I. This Bacillus cereus (strain AH820) protein is Phospho-N-acetylmuramoyl-pentapeptide-transferase.